A 302-amino-acid chain; its full sequence is Protein FdhE homolog (302 aa).

It belongs to the FdhE family.

It localises to the cytoplasm. In terms of biological role, necessary for formate dehydrogenase activity. The chain is Protein FdhE homolog from Haemophilus influenzae (strain PittEE).